The chain runs to 477 residues: Stromelysin-3 (477 aa).

The first 17 residues, 1–17 (MHLLILLPALCVLGAHS), serve as a signal peptide directing secretion. A propeptide spans 18–85 (APLSYTYLQH…SSSGRNRQKR (68 aa)) (activation peptide). Positions 64–83 (RCGVPDIPAPPDSSSGRNRQ) are disordered. 3 residues coordinate Zn(2+): cysteine 65, histidine 152, and aspartate 154. The Ca(2+) site is built by aspartate 159, glycine 160, glycine 162, and isoleucine 164. Histidine 167, histidine 180, and histidine 203 together coordinate Zn(2+). Glutamate 204 is an active-site residue. Zn(2+) is bound by residues histidine 207 and histidine 213. Cysteine 279 and cysteine 466 form a disulfide bridge. 4 Hemopexin repeats span residues 280-324 (KTNF…WRGI), 325-369 (PDTV…GISV), 370-418 (TQIQ…WRGV), and 419-466 (PKGI…FFNC).

Belongs to the peptidase M10A family. Ca(2+) serves as cofactor. Requires Zn(2+) as cofactor. As to expression, expressed in fibroblast cells that are activated by thyroid hormone. High levels in resorbing tail.

The protein resides in the secreted. It is found in the extracellular space. It localises to the extracellular matrix. Functionally, may be involved in the modification of the extracellular matrix during metamorphic apoptosis. The polypeptide is Stromelysin-3 (mmp11) (Xenopus laevis (African clawed frog)).